The sequence spans 355 residues: uncharacterized protein (355 aa).

A run of 3 helical transmembrane segments spans residues 275 to 295 (SLIV…FVAF), 301 to 321 (WNSI…VVGV), and 330 to 350 (IAST…PLAL).

The protein to M.tuberculosis Rv0497.

It localises to the cell membrane. This is an uncharacterized protein from Mycobacterium leprae (strain TN).